Here is a 159-residue protein sequence, read N- to C-terminus: Cyclic pyranopterin monophosphate synthase (159 aa).

Residues 74-76 (MCH) and 112-113 (ME) each bind substrate. Residue aspartate 127 is part of the active site.

Belongs to the MoaC family. As to quaternary structure, homohexamer; trimer of dimers.

The catalysed reaction is (8S)-3',8-cyclo-7,8-dihydroguanosine 5'-triphosphate = cyclic pyranopterin phosphate + diphosphate. It participates in cofactor biosynthesis; molybdopterin biosynthesis. In terms of biological role, catalyzes the conversion of (8S)-3',8-cyclo-7,8-dihydroguanosine 5'-triphosphate to cyclic pyranopterin monophosphate (cPMP). The polypeptide is Cyclic pyranopterin monophosphate synthase (Helicobacter hepaticus (strain ATCC 51449 / 3B1)).